The primary structure comprises 333 residues: Quinolinate synthase (333 aa).

Residues H41 and S58 each contribute to the iminosuccinate site. C103 serves as a coordination point for [4Fe-4S] cluster. Residues 129–131 (YIN) and S146 contribute to the iminosuccinate site. C189 is a [4Fe-4S] cluster binding site. Iminosuccinate contacts are provided by residues 215-217 (HPE) and T232. C282 serves as a coordination point for [4Fe-4S] cluster.

The protein belongs to the quinolinate synthase family. Type 2 subfamily. The cofactor is [4Fe-4S] cluster.

The protein localises to the cytoplasm. The catalysed reaction is iminosuccinate + dihydroxyacetone phosphate = quinolinate + phosphate + 2 H2O + H(+). The protein operates within cofactor biosynthesis; NAD(+) biosynthesis; quinolinate from iminoaspartate: step 1/1. Functionally, catalyzes the condensation of iminoaspartate with dihydroxyacetone phosphate to form quinolinate. This chain is Quinolinate synthase, found in Prochlorococcus marinus (strain MIT 9303).